Reading from the N-terminus, the 99-residue chain is Nucleoid-associated protein EbfC (99 aa).

Belongs to the YbaB/EbfC family. As to quaternary structure, homodimer.

Its subcellular location is the cytoplasm. The protein localises to the nucleoid. Its function is as follows. Binds to DNA and alters its conformation. May be involved in regulation of gene expression, nucleoid organization and DNA protection. This chain is Nucleoid-associated protein EbfC, found in Borrelia hermsii (strain HS1 / DAH).